The following is a 342-amino-acid chain: Outer membrane porin C (342 aa).

Belongs to the Gram-negative porin family. As to quaternary structure, homotrimer.

The protein localises to the cell outer membrane. Forms pores that allow passive diffusion of small molecules across the outer membrane. In R.aquatilis OmpC is involved in the adhesion to wheat roots. This chain is Outer membrane porin C (ompC), found in Rahnella aquatilis.